The sequence spans 118 residues: MARIAGINIPDQKHTVIALTAIFGIGRTRARAICASTSIAEDAKIKELSEAQIDILREEVAKYTVEGDLRREISMNIKRLMDLGCYRGLRHRRSLPLRGQRTKTNARTRKGPRKPIRK.

The tract at residues 94 to 118 (SLPLRGQRTKTNARTRKGPRKPIRK) is disordered.

Belongs to the universal ribosomal protein uS13 family. As to quaternary structure, part of the 30S ribosomal subunit. Forms a loose heterodimer with protein S19. Forms two bridges to the 50S subunit in the 70S ribosome.

Functionally, located at the top of the head of the 30S subunit, it contacts several helices of the 16S rRNA. In the 70S ribosome it contacts the 23S rRNA (bridge B1a) and protein L5 of the 50S subunit (bridge B1b), connecting the 2 subunits; these bridges are implicated in subunit movement. Contacts the tRNAs in the A and P-sites. In Shewanella frigidimarina (strain NCIMB 400), this protein is Small ribosomal subunit protein uS13.